We begin with the raw amino-acid sequence, 282 residues long: Bis(5'-nucleosyl)-tetraphosphatase, symmetrical (282 aa).

This sequence belongs to the Ap4A hydrolase family.

The enzyme catalyses P(1),P(4)-bis(5'-adenosyl) tetraphosphate + H2O = 2 ADP + 2 H(+). In terms of biological role, hydrolyzes diadenosine 5',5'''-P1,P4-tetraphosphate to yield ADP. The sequence is that of Bis(5'-nucleosyl)-tetraphosphatase, symmetrical from Paraburkholderia phymatum (strain DSM 17167 / CIP 108236 / LMG 21445 / STM815) (Burkholderia phymatum).